A 221-amino-acid polypeptide reads, in one-letter code: Casparian strip membrane protein 3 (221 aa).

Over residues 1–12 (MDIEKAGSRREE) the composition is skewed to basic and acidic residues. The segment at 1-27 (MDIEKAGSRREEEEPIVQRPKLDKGKG) is disordered. The Cytoplasmic segment spans residues 1-58 (MDIEKAGSRREEEEPIVQRPKLDKGKGKAHVFAPPMNYNRIMDKHKQEKMSPAGWKRG). The helical transmembrane segment at 59–79 (VAIFDFVLRLIAAITAMAAAA) threads the bilayer. Over 80-109 (KMATTEETLPFFTQFLQFQADYTDLPTMSS) the chain is Extracellular. Residues 110–130 (FVIVNSIVGGYLTLSLPFSIV) form a helical membrane-spanning segment. At 131 to 148 (CILRPLAVPPRLFLILCD) the chain is on the cytoplasmic side. A helical membrane pass occupies residues 149–169 (TVMMGLTLMAASASAAIVYLA). The Extracellular portion of the chain corresponds to 170–194 (HNGNSSSNWLPVCQQFGDFCQGTSG). An N-linked (GlcNAc...) asparagine glycan is attached at asparagine 173. Residues 195-215 (AVVASFIAATLLMFLVILSAF) form a helical membrane-spanning segment. The Cytoplasmic segment spans residues 216–221 (ALKRTT).

The protein belongs to the Casparian strip membrane proteins (CASP) family. In terms of assembly, homodimer and heterodimers with other CASP proteins. Interacts with CASP1, CASP2, CASP4 and CASP5.

Its subcellular location is the cell membrane. In terms of biological role, regulates membrane-cell wall junctions and localized cell wall deposition. Required for establishment of the Casparian strip membrane domain (CSD) and the subsequent formation of Casparian strips, a cell wall modification of the root endodermis that determines an apoplastic barrier between the intraorganismal apoplasm and the extraorganismal apoplasm and prevents lateral diffusion. In Arabidopsis thaliana (Mouse-ear cress), this protein is Casparian strip membrane protein 3 (CASP3).